A 242-amino-acid polypeptide reads, in one-letter code: Type III pantothenate kinase (242 aa).

5-12 (DLGNTRLK) is a binding site for ATP. Substrate is bound by residues tyrosine 94 and 100–103 (GCDR). Residue aspartate 102 is the Proton acceptor of the active site. Residue threonine 124 coordinates ATP. Threonine 175 serves as a coordination point for substrate.

The protein belongs to the type III pantothenate kinase family. In terms of assembly, homodimer. It depends on NH4(+) as a cofactor. K(+) is required as a cofactor.

The protein localises to the cytoplasm. The catalysed reaction is (R)-pantothenate + ATP = (R)-4'-phosphopantothenate + ADP + H(+). The protein operates within cofactor biosynthesis; coenzyme A biosynthesis; CoA from (R)-pantothenate: step 1/5. Catalyzes the phosphorylation of pantothenate (Pan), the first step in CoA biosynthesis. This is Type III pantothenate kinase from Psychrobacter cryohalolentis (strain ATCC BAA-1226 / DSM 17306 / VKM B-2378 / K5).